The sequence spans 308 residues: Ribosomal RNA small subunit methyltransferase H (308 aa).

S-adenosyl-L-methionine-binding positions include 32-34, Asp52, Phe79, Asp100, and Gln107; that span reads AGH.

It belongs to the methyltransferase superfamily. RsmH family.

It is found in the cytoplasm. The enzyme catalyses cytidine(1402) in 16S rRNA + S-adenosyl-L-methionine = N(4)-methylcytidine(1402) in 16S rRNA + S-adenosyl-L-homocysteine + H(+). Specifically methylates the N4 position of cytidine in position 1402 (C1402) of 16S rRNA. This is Ribosomal RNA small subunit methyltransferase H from Mycoplasma mycoides subsp. mycoides SC (strain CCUG 32753 / NCTC 10114 / PG1).